A 499-amino-acid polypeptide reads, in one-letter code: MPHPRRYHSSERGSRGSYREHYRSRKHKRRRSRSWSSSSDRTRRRRREDSYHVRSRSSYDDRSSDRRVYDRRYCGSYRRNDYSRDRGDAYYDTDYRHSYEYQRENSSYRSQRSSRRKHRRRRRRSRTFSRSSSQHSSRRAKSVEDDAEGHLIYHVGDWLQERYEIVSTLGEGTFGRVVQCVDHRRGGARVALKIIKNVEKYKEAARLEINVLEKINEKDPDNKNLCVQMFDWFDYHGHMCISFELLGLSTFDFLKDNNYLPYPIHQVRHMAFQLCQAVKFLHDNKLTHTDLKPENILFVNSDYELTYNLEKKRDERSVKSTAVRVVDFGSATFDHEHHSTIVSTRHYRAPEVILELGWSQPCDVWSIGCIIFEYYVGFTLFQTHDNREHLAMMERILGPIPSRMIRKTRKQKYFYRGRLDWDENTSAGRYVRENCKPLRRYLTSEAEEHHQLFDLIESMLEYEPAKRLTLGEALQHPFFARLRAEPPNKLWDSSRDISR.

A disordered region spans residues 1-67 (MPHPRRYHSS…SYDDRSSDRR (67 aa)). Basic and acidic residues predominate over residues 8 to 21 (HSSERGSRGSYREH). The segment covering 22-33 (YRSRKHKRRRSR) has biased composition (basic residues). Ser-34 is modified (phosphoserine; by PKB/AKT1). A compositionally biased stretch (basic and acidic residues) spans 47 to 67 (REDSYHVRSRSSYDDRSSDRR). At Ser-98 the chain carries Phosphoserine. A Phosphotyrosine; by autocatalysis modification is found at Tyr-99. Residues 101–143 (YQRENSSYRSQRSSRRKHRRRRRRSRTFSRSSSQHSSRRAKSV) form a disordered region. Positions 112–127 (RSSRRKHRRRRRRSRT) are enriched in basic residues. The residue at position 127 (Thr-127) is a Phosphothreonine; by PKB/AKT1. At Ser-142 the chain carries Phosphoserine; by autocatalysis. Tyr-153 bears the Phosphotyrosine mark. Residues 163–479 (YEIVSTLGEG…LGEALQHPFF (317 aa)) enclose the Protein kinase domain. Residues 169–177 (LGEGTFGRV) and Lys-193 contribute to the ATP site. Asp-290 (proton acceptor) is an active-site residue. The residue at position 344 (Thr-344) is a Phosphothreonine; by PKB/AKT2.

The protein belongs to the protein kinase superfamily. CMGC Ser/Thr protein kinase family. Lammer subfamily. Interacts with RBMX. Interacts with AKT1 and UBL5. In terms of processing, autophosphorylates on all three types of residues. Phosphorylation on Ser-34 and Thr-127 by AKT1 is induced by ionizing radiation or insulin. Phosphorylation plays a critical role in cell proliferation following low dose radiation and prevents cell death following high dose radiation. Phosphorylation at Thr-344 by PKB/AKT2 induces its kinase activity which is required for its stability. The phosphorylation status at Ser-142 influences its subnuclear localization; inhibition of phosphorylation at Ser-142 results in accumulation in the nuclear speckle. In terms of tissue distribution, endothelial cells. Expressed in androgen-dependent prostate cancer cells.

It localises to the nucleus. The protein resides in the nucleus speckle. The enzyme catalyses L-seryl-[protein] + ATP = O-phospho-L-seryl-[protein] + ADP + H(+). It carries out the reaction L-threonyl-[protein] + ATP = O-phospho-L-threonyl-[protein] + ADP + H(+). The catalysed reaction is L-tyrosyl-[protein] + ATP = O-phospho-L-tyrosyl-[protein] + ADP + H(+). Its activity is regulated as follows. 5,6-dichloro-1-b-D-ribofuranosylbenzimidazole (DRB) inhibits autophosphorylation. TG003 inhibits its kinase activity and affects the regulation of alternative splicing mediated by phosphorylation of SR proteins. Dual specificity kinase acting on both serine/threonine and tyrosine-containing substrates. Phosphorylates serine- and arginine-rich (SR) proteins of the spliceosomal complex. May be a constituent of a network of regulatory mechanisms that enable SR proteins to control RNA splicing and can cause redistribution of SR proteins from speckles to a diffuse nucleoplasmic distribution. Acts as a suppressor of hepatic gluconeogenesis and glucose output by repressing PPARGC1A transcriptional activity on gluconeogenic genes via its phosphorylation. Phosphorylates PPP2R5B thereby stimulating the assembly of PP2A phosphatase with the PPP2R5B-AKT1 complex leading to dephosphorylation of AKT1. Phosphorylates: PTPN1, SRSF1 and SRSF3. Regulates the alternative splicing of tissue factor (F3) pre-mRNA in endothelial cells. Phosphorylates PAGE4 at several serine and threonine residues and this phosphorylation attenuates the ability of PAGE4 to potentiate the transcriptional activator activity of JUN. The sequence is that of Dual specificity protein kinase CLK2 (CLK2) from Homo sapiens (Human).